A 249-amino-acid polypeptide reads, in one-letter code: 3-deoxy-manno-octulosonate cytidylyltransferase (249 aa).

Belongs to the KdsB family.

The protein resides in the cytoplasm. It catalyses the reaction 3-deoxy-alpha-D-manno-oct-2-ulosonate + CTP = CMP-3-deoxy-beta-D-manno-octulosonate + diphosphate. The protein operates within nucleotide-sugar biosynthesis; CMP-3-deoxy-D-manno-octulosonate biosynthesis; CMP-3-deoxy-D-manno-octulosonate from 3-deoxy-D-manno-octulosonate and CTP: step 1/1. It participates in bacterial outer membrane biogenesis; lipopolysaccharide biosynthesis. Its function is as follows. Activates KDO (a required 8-carbon sugar) for incorporation into bacterial lipopolysaccharide in Gram-negative bacteria. The sequence is that of 3-deoxy-manno-octulosonate cytidylyltransferase from Aliivibrio salmonicida (strain LFI1238) (Vibrio salmonicida (strain LFI1238)).